We begin with the raw amino-acid sequence, 378 residues long: MHLNTTLLVSLALGAASVLASPAPPAITAPPTAEEIAKRATTCTFSGSNGASSASKSKTSCSTIVLSNVAVPSGTTLDLTKLNDGTHVIFSGETTFGYKEWSGPLISVSGSDLTITGASGHSINGDGSRWWDGEGGNGGKTKPKFFAAHSLTNSVISGLKIVNSPVQVFSVAGSDYLTLKDITIDNSDGDDNGGHNTDAFDIGTSTYVTISGATVYNQDDCVAVNSGENIYFSGGYCSGGHGLSIGSVGGRSDNTVKNVTFVDSTIINSDNGVRIKTNIDTTGSVSDVTYKDITLTSIAKYGIVVQQNYGDTSSTPTTGVPITDFVLDNVHGSVVSSGTNILISCGSGSCSDWTWTDVSVSGGKTSSKCTNVPSGASC.

A signal peptide spans 1 to 20 (MHLNTTLLVSLALGAASVLA). The propeptide occupies 21 to 39 (SPAPPAITAPPTAEEIAKR). A disulfide bridge connects residues cysteine 43 and cysteine 61. The O-linked (Man...) threonine glycan is linked to threonine 44. Residues serine 46, serine 48, serine 52, serine 53, serine 55, serine 57, and serine 62 are each glycosylated (O-linked (Man...) serine). A glycan (O-linked (Man...) threonine) is linked at threonine 63. Serine 73 is a glycosylation site (O-linked (Man...) serine). PbH1 repeat units follow at residues 174 to 204 (SDYL…DIGT), 205 to 226 (STYV…AVNS), 227 to 247 (GENI…SIGS), 256 to 277 (VKNV…RIKT), and 285 to 307 (VSDV…VVQQ). Residue aspartate 219 is the Proton donor of the active site. Cysteine 221 and cysteine 237 are joined by a disulfide. The active site involves histidine 241. Asparagine 258 carries N-linked (GlcNAc...) asparagine glycosylation. 2 disulfide bridges follow: cysteine 345/cysteine 350 and cysteine 369/cysteine 378.

This sequence belongs to the glycosyl hydrolase 28 family.

The protein resides in the secreted. It carries out the reaction (1,4-alpha-D-galacturonosyl)n+m + H2O = (1,4-alpha-D-galacturonosyl)n + (1,4-alpha-D-galacturonosyl)m.. Its function is as follows. Involved in maceration and soft-rotting of plant tissue. Hydrolyzes the 1,4-alpha glycosidic bonds of de-esterified pectate in the smooth region of the plant cell wall. The chain is Endopolygalacturonase I (pgaI) from Aspergillus aculeatus.